The chain runs to 67 residues: Metallothionein-A (67 aa).

Belongs to the metallothionein superfamily. Type 4 family.

Its function is as follows. Metallothioneins have a high content of cysteine residues that bind various heavy metals. This is Metallothionein-A from Sphaerechinus granularis (Purple sea urchin).